The sequence spans 203 residues: SOSS complex subunit B1-A (203 aa).

The OB DNA-binding region spans 22–92 (IVLETGRVTK…TLYTGRGGDL (71 aa)). Residues 110 to 203 (EPNPEYIAQQ…GKESRRTGKR (94 aa)) form a disordered region. Positions 118 to 140 (QQSQSKQGQQESGTGTNNHNSSS) are enriched in low complexity. The segment covering 149–182 (ENGNGSNSSGPPAHQSTAPAHSASGRITRSQPNH) has biased composition (polar residues).

Belongs to the SOSS-B family. SOSS-B1 subfamily. Component of the SOSS complex, composed of soss-b (soss-b1/nabp2 or soss-b2/nabp1), soss-a/ints3 and soss-c/inip. SOSS complexes containing soss-b1/nabp2 are more abundant than complexes containing soss-b2/nabp1.

The protein resides in the nucleus. Its function is as follows. Component of the SOSS complex, a multiprotein complex that functions downstream of the MRN complex to promote DNA repair and G2/M checkpoint. In the SOSS complex, acts as a sensor of single-stranded DNA that binds to single-stranded DNA. The SOSS complex associates with DNA lesions and influences diverse endpoints in the cellular DNA damage response including cell-cycle checkpoint activation, recombinational repair and maintenance of genomic stability. Required for efficient homologous recombination-dependent repair of double-strand breaks (DSBs). In Xenopus laevis (African clawed frog), this protein is SOSS complex subunit B1-A (nabp2-a).